A 390-amino-acid chain; its full sequence is Odorant receptor 85b (390 aa).

The Cytoplasmic portion of the chain corresponds to 1–30; the sequence is MEKLMKYASFFYTAVGIRPYTNGEESKMNK. A helical membrane pass occupies residues 31–51; the sequence is LIFHIVFWSNVINLSFVGLFE. At 52–66 the chain is on the extracellular side; it reads SIYVYSAFMDNKFLE. A helical transmembrane segment spans residues 67-87; sequence AVTALSYIGFVTVGMSKMFFI. The Cytoplasmic portion of the chain corresponds to 88–126; sequence RWKKTAITELINELKEIYPNGLIREERYNLPMYLGTCSR. A helical membrane pass occupies residues 127 to 147; that stretch reads ISLIYSLLYSVLIWTFNLFCV. Residues 148 to 200 lie on the Extracellular side of the membrane; the sequence is MEYWVYDKWLNIRVVGKQLPYLMYIPWKWQDNWSYYPLLFSQNFAGYTSAAGQ. Asparagine 179 is a glycosylation site (N-linked (GlcNAc...) asparagine). The chain crosses the membrane as a helical span at residues 201-221; that stretch reads ISTDVLLCAVATQLVMHFDFL. Residues 222-260 are Cytoplasmic-facing; that stretch reads SNSMERHELSGDWKKDSRFLVDIVRYHERILRLSDAVND. The helical transmembrane segment at 261 to 281 threads the bilayer; it reads IFGIPLLLNFMVSSFVICFVG. The Extracellular portion of the chain corresponds to 282–291; the sequence is FQMTVGVPPD. A helical transmembrane segment spans residues 292-312; it reads IVVKLFLFLVSSMSQVYLICH. Topologically, residues 313 to 360 are cytoplasmic; the sequence is YGQLVADASYGFSVATYNQKWYKADVRYKRALVIIIARSQKVTFLKAT. Residues 361-381 form a helical membrane-spanning segment; the sequence is IFLDITRSTMTDLLQISYKFF. Residues 382–390 are Extracellular-facing; the sequence is ALLRTMYTQ.

It belongs to the insect chemoreceptor superfamily. Heteromeric odorant receptor channel (TC 1.A.69) family. Or49a subfamily. Interacts with Orco. Complexes exist early in the endomembrane system in olfactory sensory neurons (OSNs), coupling these complexes to the conserved ciliary trafficking pathway. Expressed in olfactory sensory neurons in the antenna.

The protein resides in the cell membrane. Its function is as follows. Odorant receptor which mediates acceptance or avoidance behavior, depending on its substrates. The odorant receptor repertoire encodes a large collection of odor stimuli that vary widely in identity, intensity, and duration. Forms a complex with Orco to form odorant-sensing units, providing sensitive and prolonged odorant signaling and calcium permeability. Involved in the behavioral responses to 2-heptanone, amyl acetate, and butyl acetate. The chain is Odorant receptor 85b (Or85b) from Drosophila melanogaster (Fruit fly).